We begin with the raw amino-acid sequence, 85 residues long: Putative membrane protein insertion efficiency factor (85 aa).

This sequence belongs to the UPF0161 family.

The protein resides in the cell membrane. Could be involved in insertion of integral membrane proteins into the membrane. The chain is Putative membrane protein insertion efficiency factor from Leifsonia xyli subsp. xyli (strain CTCB07).